We begin with the raw amino-acid sequence, 210 residues long: MMLNLIIVHLFGLMTPGPDFFYVSRMAASNSRRNTVCGILGITLGIAFWGMLSMLGLAVLFVTIPALHGVIMLLGGSYLAYLGFLMARSKKYAKFESHSDTEFNQQTTIKKEILKGLLVNLSNAKVVVYFSSVMSLVLVNITEMWQIILAFAVIVVETFCYFYVISLIFSRNIAKRLYSQYSRYIDNMAGIVFLFFGCVLVYNGINEIIH.

The next 5 helical transmembrane spans lie at 42–62 (ITLG…VLFV), 66–86 (ALHG…GFLM), 126–146 (VVVY…EMWQ), 147–167 (IILA…VISL), and 189–209 (AGIV…NEII).

Belongs to the Rht family.

It localises to the cell membrane. This is an uncharacterized protein from Haemophilus influenzae (strain ATCC 51907 / DSM 11121 / KW20 / Rd).